The chain runs to 548 residues: Glucose-6-phosphate isomerase (548 aa).

Residue E355 is the Proton donor of the active site. Catalysis depends on residues H386 and K514.

It belongs to the GPI family.

The protein localises to the cytoplasm. The catalysed reaction is alpha-D-glucose 6-phosphate = beta-D-fructose 6-phosphate. Its pathway is carbohydrate biosynthesis; gluconeogenesis. It functions in the pathway carbohydrate degradation; glycolysis; D-glyceraldehyde 3-phosphate and glycerone phosphate from D-glucose: step 2/4. Its function is as follows. Catalyzes the reversible isomerization of glucose-6-phosphate to fructose-6-phosphate. The polypeptide is Glucose-6-phosphate isomerase (Yersinia pestis (strain Pestoides F)).